Reading from the N-terminus, the 658-residue chain is Integrator complex subunit 9 (658 aa).

Positions 2 and 19 each coordinate 1D-myo-inositol hexakisphosphate. Lys-58 participates in a covalent cross-link: Glycyl lysine isopeptide (Lys-Gly) (interchain with G-Cter in SUMO2). Positions 510 and 511 each coordinate 1D-myo-inositol hexakisphosphate. The interval 548–574 is disordered; the sequence is DNKHLLQPPPRPAQPTSGKKRKRVSDD. A Nuclear localization signal motif is present at residues 566–570; the sequence is KKRKR.

The protein belongs to the metallo-beta-lactamase superfamily. RNA-metabolizing metallo-beta-lactamase-like family. INTS9 subfamily. In terms of assembly, component of the Integrator complex, composed of core subunits INTS1, INTS2, INTS3, INTS4, INTS5, INTS6, INTS7, INTS8, INTS9/RC74, INTS10, INTS11/CPSF3L, INTS12, INTS13, INTS14 and INTS15. The core complex associates with protein phosphatase 2A subunits PPP2CA and PPP2R1A, to form the Integrator-PP2A (INTAC) complex. INTS9 is part of the RNA endonuclease subcomplex, composed of INTS4, INTS9, INTS11 and inositol hexakisphosphate (InsP6). Interacts with WDR73; interaction is required for the assembly of the RNA endonuclease subcomplex in the cytoplasm. Interacts with BRAT1; interaction is required for the assembly of the RNA endonuclease subcomplex. Interacts with ESRRB, ESRRB is not a core component of the Integrator complex and this association is a bridge for the interaction with the multiprotein complex Integrator; attracts the transcriptional machinery.

The protein localises to the nucleus. Its subcellular location is the cytoplasm. Functionally, component of the integrator complex, a multiprotein complex that terminates RNA polymerase II (Pol II) transcription in the promoter-proximal region of genes. The integrator complex provides a quality checkpoint during transcription elongation by driving premature transcription termination of transcripts that are unfavorably configured for transcriptional elongation: the complex terminates transcription by (1) catalyzing dephosphorylation of the C-terminal domain (CTD) of Pol II subunit POLR2A/RPB1 and SUPT5H/SPT5, (2) degrading the exiting nascent RNA transcript via endonuclease activity and (3) promoting the release of Pol II from bound DNA. The integrator complex is also involved in terminating the synthesis of non-coding Pol II transcripts, such as enhancer RNAs (eRNAs), small nuclear RNAs (snRNAs), telomerase RNAs and long non-coding RNAs (lncRNAs). Mediates recruitment of cytoplasmic dynein to the nuclear envelope, probably as component of the integrator complex. The chain is Integrator complex subunit 9 from Homo sapiens (Human).